A 450-amino-acid chain; its full sequence is CD209 antigen (450 aa).

At 1–37 (MSDSKEPSVQQLGLLEEEQLRGLGFRQTRGYKSLAGC) the chain is on the cytoplasmic side. Short sequence motifs (endocytosis signal) lie at residues 14–15 (LL), 16–18 (EEE), and 31–34 (YKSL). Residues 38 to 58 (LGHGALVLQLLSFTLLAGLLI) form a helical; Signal-anchor for type II membrane protein membrane-spanning segment. At 59–450 (QVSKFPSSIS…APATPNPPPV (392 aa)) the chain is on the extracellular side. Residue Asn-80 is glycosylated (N-linked (GlcNAc...) asparagine). A run of 9 repeats spans residues 96-118 (KLQE…PEKS), 119-141 (KQQE…PEKS), 142-164 (KQQE…PEKS), 165-187 (KQQE…PEKS), 188-210 (KQQE…PEKS), 211-233 (KQQE…PEKS), 234-256 (KQQE…PEKS), 257-279 (KQQE…PEKS), and 280-303 (KQQE…RPCP). The segment at 96–303 (KLQEIYQELT…AVERLCRPCP (208 aa)) is 9 X approximate tandem repeats. 3 cysteine pairs are disulfide-bonded: Cys-302-Cys-313, Cys-330-Cys-423, and Cys-402-Cys-415. The C-type lectin domain maps to 309–424 (FQGNCYFMSN…CNLAKFWICK (116 aa)). Ca(2+)-binding residues include Glu-393, Asn-395, Val-397, Glu-400, Asn-411, and Asp-412.

As to quaternary structure, homotetramer. Interacts with C1QBP; the interaction is indicative for a C1q:C1QBP:CD209 signaling complex. Interacts with ICAM2 and ICAM3 by binding to mannose-like carbohydrates. Interacts (via C-type lectin domain) with CEACAM1 (via Lewis X moieties); this interaction is regulated by the glycosylation pattern of CEACAM1 on cell types and regulates contact between dendritic cells and neutrophils.

The protein resides in the membrane. Functionally, pathogen-recognition receptor expressed on the surface of immature dendritic cells (DCs) and involved in initiation of primary immune response. Thought to mediate the endocytosis of pathogens which are subsequently degraded in lysosomal compartments. The receptor returns to the cell membrane surface and the pathogen-derived antigens are presented to resting T-cells via MHC class II proteins to initiate the adaptive immune response. Probably recognizes in a calcium-dependent manner high mannose N-linked oligosaccharides in a variety of pathogen antigens. Its function is as follows. On DCs it is a high affinity receptor for ICAM2 and ICAM3 by binding to mannose-like carbohydrates. May act as a DC rolling receptor that mediates transendothelial migration of DC presursors from blood to tissues by binding endothelial ICAM2. Seems to regulate DC-induced T-cell proliferation by binding to ICAM3 on T-cells in the immunological synapse formed between DC and T-cells. This chain is CD209 antigen (CD209), found in Hylobates lar (Lar gibbon).